The primary structure comprises 102 residues: Co-chaperonin GroES (102 aa).

It belongs to the GroES chaperonin family. Heptamer of 7 subunits arranged in a ring. Interacts with the chaperonin GroEL.

The protein localises to the cytoplasm. Its function is as follows. Together with the chaperonin GroEL, plays an essential role in assisting protein folding. The GroEL-GroES system forms a nano-cage that allows encapsulation of the non-native substrate proteins and provides a physical environment optimized to promote and accelerate protein folding. GroES binds to the apical surface of the GroEL ring, thereby capping the opening of the GroEL channel. This Chlamydia caviae (strain ATCC VR-813 / DSM 19441 / 03DC25 / GPIC) (Chlamydophila caviae) protein is Co-chaperonin GroES.